Here is a 750-residue protein sequence, read N- to C-terminus: MSIISSWLLVSIICLTTSIVTKLQAAGVTTHLFYLTRGAPLSLKENYYPWLKAGSFFPDALYSCAPSNKDWSDFAEFTHWPNFLMIAVSYWQQKYGQNDRLRGTHGSLALKSFLIGVFTHQIVDVSWHSLVTDYRMHGLLRVLSETEFDGDIETAHTFLDVMGEFLTLNNVIRDSNNNENWDFLTRSDWKLPREEDLMEIIRNAGLSKEKLSYAELEFCVKRGMAAAISEGYLFRSQRNQLLTNIYSTSPRANDLILNHWLGGQSNLVAMLQRCVPFFETLFHDENTNEAQAEELRLCANLPPVSQKRINARPLVSSLKARKGNSHIVVSPMKSFSDFGTSLTMGKFREDNKDYLAVSAPLEDTVGAIYIVPWDILTVARKEDFSILQPITAMYGSKVGTYKASDVDYLLVSQPGTCTIDFYFKGVKILTIKDETTEEAHQLQFAVTGNFYDDKIPDLVVSSPSYGANETGIATFIPGSSIISYLTNSDKYQVVDISTFKGVINLDGYPMKIPFQHFGATIQISDTTDKQKLIYITCQSLGTVFVYSSNDLHDLSIPIYYITKNGVIPAKDSDHVEWHIIPSKEHGMFGAAIYSWNFEGMSFVAVSQPMFDTVFIYIEKSGQIEFFLKLVLKIKTKSDSIPDEFGSSLLFNDEEKKLYVSSPGSFDARGSIWKISMDELLKAGNDPKRKTLLINNLRHLMLINPDKSSKGVSNFGNSMILGPQNHLIVGIPQYGYGNFDHMQLTGRILVL.

Helical transmembrane passes span 1 to 21 (MSII…SIVT), 465 to 485 (YGAN…ISYL), and 586 to 606 (GMFG…VAVS).

The protein localises to the membrane. This is an uncharacterized protein from Saccharomyces cerevisiae (strain ATCC 204508 / S288c) (Baker's yeast).